The sequence spans 103 residues: Large ribosomal subunit protein bL21 (103 aa).

It belongs to the bacterial ribosomal protein bL21 family. In terms of assembly, part of the 50S ribosomal subunit. Contacts protein L20.

In terms of biological role, this protein binds to 23S rRNA in the presence of protein L20. This Shewanella sp. (strain ANA-3) protein is Large ribosomal subunit protein bL21.